Reading from the N-terminus, the 275-residue chain is Urease accessory protein UreD (275 aa).

The protein belongs to the UreD family. In terms of assembly, ureD, UreF and UreG form a complex that acts as a GTP-hydrolysis-dependent molecular chaperone, activating the urease apoprotein by helping to assemble the nickel containing metallocenter of UreC. The UreE protein probably delivers the nickel.

Its subcellular location is the cytoplasm. Required for maturation of urease via the functional incorporation of the urease nickel metallocenter. This is Urease accessory protein UreD from Cereibacter sphaeroides (strain ATCC 17025 / ATH 2.4.3) (Rhodobacter sphaeroides).